A 338-amino-acid polypeptide reads, in one-letter code: Glyceraldehyde-3-phosphate dehydrogenase (338 aa).

Residues 12–13, aspartate 34, and arginine 79 contribute to the NAD(+) site; that span reads RI. D-glyceraldehyde 3-phosphate is bound by residues 150–152, threonine 181, 210–211, and arginine 233; these read SCT and TG. Cysteine 151 acts as the Nucleophile in catalysis. Asparagine 316 contacts NAD(+).

Belongs to the glyceraldehyde-3-phosphate dehydrogenase family. In terms of assembly, homotetramer.

The protein localises to the cytoplasm. The catalysed reaction is D-glyceraldehyde 3-phosphate + phosphate + NAD(+) = (2R)-3-phospho-glyceroyl phosphate + NADH + H(+). It functions in the pathway carbohydrate degradation; glycolysis; pyruvate from D-glyceraldehyde 3-phosphate: step 1/5. The polypeptide is Glyceraldehyde-3-phosphate dehydrogenase (GPD) (Phaffia rhodozyma (Yeast)).